Consider the following 132-residue polypeptide: Transcriptional regulator MraZ (132 aa).

SpoVT-AbrB domains follow at residues Thr-5–Asp-47 and Thr-76–Lys-119.

Belongs to the MraZ family. In terms of assembly, forms oligomers.

It localises to the cytoplasm. It is found in the nucleoid. In Mycoplasma capricolum subsp. capricolum (strain California kid / ATCC 27343 / NCTC 10154), this protein is Transcriptional regulator MraZ.